Reading from the N-terminus, the 883-residue chain is Alanine--tRNA ligase (883 aa).

Positions 560, 564, 665, and 669 each coordinate Zn(2+).

Belongs to the class-II aminoacyl-tRNA synthetase family. Zn(2+) is required as a cofactor.

It is found in the cytoplasm. It catalyses the reaction tRNA(Ala) + L-alanine + ATP = L-alanyl-tRNA(Ala) + AMP + diphosphate. Functionally, catalyzes the attachment of alanine to tRNA(Ala) in a two-step reaction: alanine is first activated by ATP to form Ala-AMP and then transferred to the acceptor end of tRNA(Ala). Also edits incorrectly charged Ser-tRNA(Ala) and Gly-tRNA(Ala) via its editing domain. The polypeptide is Alanine--tRNA ligase (Mesomycoplasma hyopneumoniae (strain J / ATCC 25934 / NCTC 10110) (Mycoplasma hyopneumoniae)).